The following is a 101-amino-acid chain: UPF0235 protein Maeo_0841 (101 aa).

It belongs to the UPF0235 family.

The protein is UPF0235 protein Maeo_0841 of Methanococcus aeolicus (strain ATCC BAA-1280 / DSM 17508 / OCM 812 / Nankai-3).